Here is a 21-residue protein sequence, read N- to C-terminus: Hydroxypicolinic acid-activating enzyme (21 aa).

Its function is as follows. Involved in etamycin biosynthesis. This is Hydroxypicolinic acid-activating enzyme from Streptomyces griseoviridis.